The sequence spans 86 residues: Sec-independent protein translocase protein TatA (86 aa).

The chain crosses the membrane as a helical span at residues 3–23 (IFGVGLPEVTVILILALLIFG). Residues 56–86 (MNEEDESPKSIESNQTNEINQEKIDSENSKK) are disordered. The span at 65 to 74 (SIESNQTNEI) shows a compositional bias: polar residues. Residues 75 to 86 (NQEKIDSENSKK) show a composition bias toward basic and acidic residues.

It belongs to the TatA/E family. As to quaternary structure, forms a complex with TatC.

It is found in the cell inner membrane. Functionally, part of the twin-arginine translocation (Tat) system that transports large folded proteins containing a characteristic twin-arginine motif in their signal peptide across membranes. TatA could form the protein-conducting channel of the Tat system. This chain is Sec-independent protein translocase protein TatA, found in Prochlorococcus marinus (strain MIT 9215).